An 853-amino-acid chain; its full sequence is Putative dipeptidyl aminopeptidase C14C4.15c (853 aa).

Positions 1-26 (MNAYEGDTLNNHGKSSTRQHWRKRSA) are disordered. Topologically, residues 1–65 (MNAYEGDTLN…AKKRRRKKHR (65 aa)) are cytoplasmic. Positions 15–25 (SSTRQHWRKRS) are enriched in basic residues. The helical; Signal-anchor for type II membrane protein transmembrane segment at 66–86 (YIYLAVCLFFLASVLSCAIIF) threads the bilayer. The Lumenal portion of the chain corresponds to 87–853 (RFYLHTNREN…SGHFHHALYC (767 aa)). Asparagine 96, asparagine 102, asparagine 472, asparagine 483, and asparagine 613 each carry an N-linked (GlcNAc...) asparagine glycan. Catalysis depends on charge relay system residues serine 719, aspartate 795, and histidine 828.

Belongs to the peptidase S9B family.

Its subcellular location is the vacuole membrane. In Schizosaccharomyces pombe (strain 972 / ATCC 24843) (Fission yeast), this protein is Putative dipeptidyl aminopeptidase C14C4.15c.